The primary structure comprises 126 residues: Large ribosomal subunit protein bL12 (126 aa).

This sequence belongs to the bacterial ribosomal protein bL12 family. As to quaternary structure, homodimer. Part of the ribosomal stalk of the 50S ribosomal subunit. Forms a multimeric L10(L12)X complex, where L10 forms an elongated spine to which 2 to 4 L12 dimers bind in a sequential fashion. Binds GTP-bound translation factors.

Its function is as follows. Forms part of the ribosomal stalk which helps the ribosome interact with GTP-bound translation factors. Is thus essential for accurate translation. This is Large ribosomal subunit protein bL12 from Citrifermentans bemidjiense (strain ATCC BAA-1014 / DSM 16622 / JCM 12645 / Bem) (Geobacter bemidjiensis).